Here is a 58-residue protein sequence, read N- to C-terminus: Putative calcium channel toxin 196 (58 aa).

The N-terminal stretch at 1–16 (GSLLLVLFLLSVICYA) is a signal peptide. Positions 17–26 (EIAAGPTKCQ) are excised as a propeptide. Disulfide bonds link Cys-25–Cys-38, Cys-31–Cys-43, and Cys-37–Cys-52.

The protein belongs to the scorpion calcin-like family. KTX subfamily. In terms of tissue distribution, expressed by the venom gland.

It localises to the secreted. Its function is as follows. May inhibit voltage-gated potassium channels Kv1.1/KCNA1, hKv1.2/KCNA2, and Kv1.3/KCNA3. May also increase intracellular calcium release through the activation of nuclear inositol 1,4,5-trisphosphate receptors (ITPR) of cardiomyocytes, thereby causing an increase in the contraction frequency of these cells. This chain is Putative calcium channel toxin 196, found in Lychas mucronatus (Chinese swimming scorpion).